The sequence spans 31 residues: Antifungal protein 1 (31 aa).

It is found in the secreted. In terms of biological role, antifungal activity against C.albicans ATCC 76615. This chain is Antifungal protein 1, found in Musca domestica (House fly).